The primary structure comprises 393 residues: Flap endonuclease 1 (393 aa).

An N-domain region spans residues 1–108 (MGILGLSKLL…SELQERRQRA (108 aa)). Aspartate 34 contributes to the Mg(2+) binding site. Arginine 74 contacts DNA. Mg(2+)-binding residues include aspartate 90, glutamate 162, glutamate 164, aspartate 183, and aspartate 185. Residues 126-257 (LMEKMSKRTV…QKAWEGIKKH (132 aa)) are I-domain. Glutamate 162 is a binding site for DNA. DNA is bound by residues glycine 235 and aspartate 237. Aspartate 237 is a binding site for Mg(2+). Residues 340–348 (TQGRLDQFF) are interaction with PCNA.

It belongs to the XPG/RAD2 endonuclease family. FEN1 subfamily. In terms of assembly, interacts with PCNA. Three molecules of FEN1 bind to one PCNA trimer with each molecule binding to one PCNA monomer. PCNA stimulates the nuclease activity without altering cleavage specificity. It depends on Mg(2+) as a cofactor. In terms of processing, phosphorylated. Phosphorylation upon DNA damage induces relocalization to the nuclear plasma.

It is found in the nucleus. The protein resides in the nucleolus. Its subcellular location is the nucleoplasm. The protein localises to the mitochondrion. Structure-specific nuclease with 5'-flap endonuclease and 5'-3' exonuclease activities involved in DNA replication and repair. During DNA replication, cleaves the 5'-overhanging flap structure that is generated by displacement synthesis when DNA polymerase encounters the 5'-end of a downstream Okazaki fragment. It enters the flap from the 5'-end and then tracks to cleave the flap base, leaving a nick for ligation. Also involved in the long patch base excision repair (LP-BER) pathway, by cleaving within the apurinic/apyrimidinic (AP) site-terminated flap. Acts as a genome stabilization factor that prevents flaps from equilibrating into structures that lead to duplications and deletions. Also possesses 5'-3' exonuclease activity on nicked or gapped double-stranded DNA, and exhibits RNase H activity. Also involved in replication and repair of rDNA and in repairing mitochondrial DNA. The chain is Flap endonuclease 1 from Trypanosoma cruzi (strain CL Brener).